Reading from the N-terminus, the 327-residue chain is Selenate reductase subunit beta (327 aa).

4Fe-4S ferredoxin-type domains follow at residues 6–35, 124–155, and 157–186; these read LAYVFDLNKCIGCHTCTMACKQLWTNRDGR, NHYFYLPRICNHCSNPACLAACPTKAIYKREE, and GLVVVDQSRCKGYRYCVKACPYGKMYFNLQ. [4Fe-4S] cluster is bound by residues C15, C18, C21, C25, C133, C136, and C141. [3Fe-4S] cluster is bound by residues C145, C166, and C172. Residues C176, C193, C196, C208, and C212 each coordinate [4Fe-4S] cluster.

As to quaternary structure, heterotrimer of alpha (SerA), beta (SerB) and gamma (SerC) subunits. [3Fe-4S] cluster is required as a cofactor. [4Fe-4S] cluster serves as cofactor.

Its subcellular location is the periplasm. It carries out the reaction selenite + 2 Fe(III)-[cytochrome c] + H2O = 2 Fe(II)-[cytochrome] + selenate + 2 H(+). Its activity is regulated as follows. Enzyme isolated from cells grown in a tungstate rich environment shows a 20-fold reduction in selenate reductase activity. In terms of biological role, component of the selenate reductase, which catalyzes the reduction of selenate to selenite and allows anaerobic growth with selenate as the sole terminal electron acceptor. A c-type di-heme cytochrome of the cytc4 family was shown to donate electrons to the selenate reductase in vitro. SerABC can also use reduced benzyl viologen or reduced methyl viologen as an electron donor. This subunit transfers electrons from SerC to SerA. The reductase is specific for selenate, and cannot reduce nitrate, nitrite, chlorate or sulfate. The sequence is that of Selenate reductase subunit beta from Thauera selenatis.